The sequence spans 261 residues: MEGGLGRAVCLLTGASRGFGRTLAPLLASLLSPGSVLVLSARNDEALRQLEAELGAERSGLRVVRVPADLGAEAGLQQLLGALRELPRPKGLQRLLLINNAGSLGDVSKGFVDLSDSTQVNNYWALNLTSMLCLTSSVLKAFPDSPGLNRTVVNISSLCALQPFKGWALYCAGKAARDMLFQVLALEEPNVRVLNYAPGPLDTDMQQLARETSVDPDMRKGLQELKAKGKLVDCKVSAQKLLSLLEKDEFKSGAHVDFYDK.

Residue methionine 1 is modified to N-acetylmethionine. 14-20 (GASRGFG) is an NADP(+) binding site. A Phosphoserine modification is found at serine 32. Residues 42–43 (RN) and 69–70 (DL) contribute to the NADP(+) site. Phosphoserine is present on serine 103. Residues 157–158 (SL) and tyrosine 170 contribute to the substrate site. NADP(+) is bound at residue lysine 174. Glycine 199 is a substrate binding site. 201–206 (LDTDMQ) contributes to the NADP(+) binding site. Phosphoserine; by CaMK2; in vitro is present on serine 213. Residue aspartate 257 participates in substrate binding.

The protein belongs to the sepiapterin reductase family. In terms of assembly, homodimer. Post-translationally, in vitro phosphorylation of Ser-213 by CaMK2 does not change kinetic parameters.

It localises to the cytoplasm. The enzyme catalyses L-erythro-7,8-dihydrobiopterin + NADP(+) = L-sepiapterin + NADPH + H(+). It catalyses the reaction (6R)-L-erythro-5,6,7,8-tetrahydrobiopterin + 2 NADP(+) = 6-pyruvoyl-5,6,7,8-tetrahydropterin + 2 NADPH + 2 H(+). Its function is as follows. Catalyzes the final one or two reductions in tetra-hydrobiopterin biosynthesis to form 5,6,7,8-tetrahydrobiopterin. This is Sepiapterin reductase (SPR) from Homo sapiens (Human).